The following is a 172-amino-acid chain: Ribosomally synthesized cyclic peptide phomopsin precursor phomA (172 aa).

The N-terminal stretch at 1–18 is a signal peptide; that stretch reads MRFTPAIVIAAFCSLAVA. Propeptides lie at residues 19 to 35, 42 to 50, 57 to 65, 72 to 79, 86 to 93, 100 to 108, 115 to 122, 129 to 137, 144 to 151, 158 to 165, and K172; these read APAAKAIARSPSEAVED, KKRGEAVED, KRGEAVED, and RKRGEAVED.

Post-translationally, phomA is processed by several endopeptidases including kexin proteases as well as the cluster-specific S41 family peptidase phomP1 and the oligopeptidase phomG to produce 10 identical copies of the hexapeptide Tyr-Val-Ile-Pro-Ile-Asp, that is further modified to yield phomapsins. The timing and order of proteolysis of the phomA precursor and PTMs are still unknown. Two tyrosinase-like enzymes, phomQ1 and phomQ2, catalyze the chlorination and hydroxylation of Tyr, respectively. PhomYb, is proposed to be involved in the construction of the macrocyclic structure. The other 4 ustYa family proteins may be involved in PTMs that generate the unique structure of phomopsin A. PhomYa is required for the hydroxylation of C-beta of Tyr. PhomYc, phomYd, and phomYe are responsible for the biosynthesis of 2,3-dehydroisoleucine (dIle), 2,3-dehydroaspartic acid (dAsp), and 3,4-dehydroproline (dPro), respectively. While dIle formation by phomYc is indispensable for the installation of dAsp by phomYd, the order of the other PTMs have not been elucidated yet. Most of the biosynthetic enzymes likely have broad substrate specificity, and thus, there might be a metabolic grid from a precursor to phomopsin A. The enzyme(s) responsible for the biosynthesis of 3,4-dehydrovaline (dVal) have also not been identified yet. Finally, phomM acts as an S-adenosylmethionine-dependent alpha-N-methyltransferase that catalyzes two successive N-methylation reactions, converting N-desmethyl-phomopsin A to phomopsin A and phomopsin A further to an N,N-dimethylated congener called phomopsin E.

It participates in mycotoxin biosynthesis. Functionally, ribosomally synthesized cyclic peptide phomopsin precursor; part of the gene cluster that mediates the biosynthesis of the phomopsins, a group of hexapeptide mycotoxins which infects lupins and causes lupinosis disease in livestock. The phomA translated product contains a 10-fold repeated peptide embedding the hexapeptide Tyr-Val-Ile-Pro-Ile-Asp, that is converted into phomapsins. After being excised from the precursor peptide by kexin proteases, the core peptides are cyclized and modified post-translationally by enzymes encoded within the corresponding gene cluster. The chain is Ribosomally synthesized cyclic peptide phomopsin precursor phomA from Diaporthe leptostromiformis (Lupinosis disease fungus).